The following is a 412-amino-acid chain: FAD-dependent monooxygenase nscC (412 aa).

Positions 1–21 (MGKQQETILIIGAGIAGLTTS) are cleaved as a signal peptide. Positions 35 and 46 each coordinate FAD. Asn92 is a glycosylation site (N-linked (GlcNAc...) asparagine). Arg119 lines the FAD pocket. Asn170 and Asn231 each carry an N-linked (GlcNAc...) asparagine glycan. The FAD site is built by Asp326 and Gly339.

This sequence belongs to the paxM FAD-dependent monooxygenase family. FAD serves as cofactor.

It functions in the pathway secondary metabolite biosynthesis. In terms of biological role, FAD-dependent monooxygenase; part of the gene cluster that mediates the biosynthesis of neosartoricin B, a prenylated anthracenone that probably exhibits T-cell antiproliferative activity, suggestive of a physiological role as an immunosuppressive agent. The non-reducing polyketide synthase nscA probably synthesizes and cyclizes the decaketide backbone. The hydrolase nscB then mediates the product release through hydrolysis followed by spontaneous decarboxylation. The prenyltransferase nscD catalyzes the addition of the dimethylallyl group to the aromatic C5. The FAD-dependent monooxygenase nscC is then responsible for the stereospecific hydroxylation at C2. Neosartoricin B can be converted into two additional compounds neosartoricins C and D. Neosartoricin C is a spirocyclic compound that is cyclized through the attack of C3 hydroxyl on C14, followed by dehydration. On the other hand, neosartoricin D is a further cyclized compound in which attack of C2 on C14 in neosartoricin C results in the formation of the acetal-containing dioxabicyclo-octanone ring. Both of these compounds are novel and possibly represent related metabolites of the gene cluster. The sequence is that of FAD-dependent monooxygenase nscC from Arthroderma benhamiae (strain ATCC MYA-4681 / CBS 112371) (Trichophyton mentagrophytes).